A 209-amino-acid chain; its full sequence is Large ribosomal subunit protein uL3 (209 aa).

Q150 is subject to N5-methylglutamine.

This sequence belongs to the universal ribosomal protein uL3 family. In terms of assembly, part of the 50S ribosomal subunit. Forms a cluster with proteins L14 and L19. Post-translationally, methylated by PrmB.

Its function is as follows. One of the primary rRNA binding proteins, it binds directly near the 3'-end of the 23S rRNA, where it nucleates assembly of the 50S subunit. The protein is Large ribosomal subunit protein uL3 of Citrobacter koseri (strain ATCC BAA-895 / CDC 4225-83 / SGSC4696).